A 72-amino-acid chain; its full sequence is Gene 42 protein (72 aa).

In Mycobacterium phage L5 (Mycobacteriophage L5), this protein is Gene 42 protein (42).